Consider the following 518-residue polypeptide: MTHLHFDNRLRQQLPGDPEEGARRREVGAAWSSVLPTPVAAPYLIAHSAEMAQVLGLEAAEIASAQFAQVFGGNALYPGMQPWAVNYGGHQFGHWAGQLGDGRAISLGEAIGTDGGRYELQLKGAGPTPYSRGADGRAVLRSSIREFLCSEAMHHLGVPTTRALSLVGTGEAVVRDMFYDGHPQREPGAIVCRVAPSFIRFGNFELPSARGDIALLKQWVDFTIARDFPALAGAGEALYADWFAQVCERTAVMVAHWMRVGFVHGVMNTDNMSILGLTIDYGPYGWVDDYDPDWTPNTTDAQGRRYRFGTQPQVAYWNLGRLAQALAPLFADQALLQYGLDRFRDTYLACDRRDTAAKLGLAECRDEDLQLIDALRALMRESEMDMTLTFRGLIDLSPEHPDPAQLRDAFYDEDKRLVDAPQLQQWLQRYAARLQQDPLSPEERRARMRLANPRYVLRNYLAQQAIDRAEQGDPSGVQELLEVMRRPYDDQHGRDAFAARRPDWARDRAGCSMLSCSS.

Residues 1 to 10 (MTHLHFDNRL) are compositionally biased toward basic and acidic residues. The disordered stretch occupies residues 1 to 25 (MTHLHFDNRLRQQLPGDPEEGARRR). The ATP site is built by glycine 100, glycine 102, arginine 103, lysine 123, aspartate 135, glycine 136, arginine 193, and arginine 200. The active-site Proton acceptor is aspartate 270. The Mg(2+) site is built by asparagine 271 and aspartate 280. An ATP-binding site is contributed by aspartate 280.

This sequence belongs to the SELO family. It depends on Mg(2+) as a cofactor. The cofactor is Mn(2+).

The enzyme catalyses L-seryl-[protein] + ATP = 3-O-(5'-adenylyl)-L-seryl-[protein] + diphosphate. It catalyses the reaction L-threonyl-[protein] + ATP = 3-O-(5'-adenylyl)-L-threonyl-[protein] + diphosphate. The catalysed reaction is L-tyrosyl-[protein] + ATP = O-(5'-adenylyl)-L-tyrosyl-[protein] + diphosphate. It carries out the reaction L-histidyl-[protein] + UTP = N(tele)-(5'-uridylyl)-L-histidyl-[protein] + diphosphate. The enzyme catalyses L-seryl-[protein] + UTP = O-(5'-uridylyl)-L-seryl-[protein] + diphosphate. It catalyses the reaction L-tyrosyl-[protein] + UTP = O-(5'-uridylyl)-L-tyrosyl-[protein] + diphosphate. Nucleotidyltransferase involved in the post-translational modification of proteins. It can catalyze the addition of adenosine monophosphate (AMP) or uridine monophosphate (UMP) to a protein, resulting in modifications known as AMPylation and UMPylation. This is Protein nucleotidyltransferase YdiU from Xanthomonas euvesicatoria pv. vesicatoria (strain 85-10) (Xanthomonas campestris pv. vesicatoria).